The chain runs to 256 residues: (E)-benzylidenesuccinyl-CoA hydratase (256 aa).

Glu-110 functions as the Nucleophile in the catalytic mechanism. Residue Glu-130 is the Proton acceptor of the active site.

Belongs to the enoyl-CoA hydratase/isomerase family. As to quaternary structure, homotrimer.

It carries out the reaction (2S)-[(R)-hydroxy(phenyl)methyl]succinyl-CoA = (E)-2-benzylidenesuccinyl-CoA + H2O. The protein operates within xenobiotic degradation; toluene degradation. Functionally, involved in an anaerobic toluene degradation pathway. Catalyzes the hydration of (E)-2-benzylidenesuccinyl-CoA to the corresponding alcohol intermediate, 2-(alpha-hydroxybenzyl)succinyl-CoA. Also accepts the N-acetylcysteamine (NAC) thioester of (E)-benzylidenesuccinate. The polypeptide is (E)-benzylidenesuccinyl-CoA hydratase (Thauera aromatica).